Reading from the N-terminus, the 215-residue chain is DNA repair and recombination protein RadB (215 aa).

This sequence belongs to the eukaryotic RecA-like protein family. RadB subfamily.

Its function is as follows. Involved in DNA repair and in homologous recombination. May regulate the cleavage reactions of the branch-structured DNA. Has a very weak ATPase activity that is not stimulated by DNA. Binds DNA but does not promote DNA strands exchange. The polypeptide is DNA repair and recombination protein RadB (Methanococcus maripaludis (strain C7 / ATCC BAA-1331)).